A 959-amino-acid chain; its full sequence is Isoleucine--tRNA ligase (959 aa).

A 'HIGH' region motif is present at residues 60–70; sequence PYANGSLHMGH. E569 contributes to the L-isoleucyl-5'-AMP binding site. The 'KMSKS' region signature appears at 610–614; that stretch reads KMSKS. Residue K613 coordinates ATP. The Zn(2+) site is built by C928, C931, C948, and C951.

Belongs to the class-I aminoacyl-tRNA synthetase family. IleS type 1 subfamily. In terms of assembly, monomer. Zn(2+) is required as a cofactor.

The protein localises to the cytoplasm. It catalyses the reaction tRNA(Ile) + L-isoleucine + ATP = L-isoleucyl-tRNA(Ile) + AMP + diphosphate. In terms of biological role, catalyzes the attachment of isoleucine to tRNA(Ile). As IleRS can inadvertently accommodate and process structurally similar amino acids such as valine, to avoid such errors it has two additional distinct tRNA(Ile)-dependent editing activities. One activity is designated as 'pretransfer' editing and involves the hydrolysis of activated Val-AMP. The other activity is designated 'posttransfer' editing and involves deacylation of mischarged Val-tRNA(Ile). The sequence is that of Isoleucine--tRNA ligase from Crocosphaera subtropica (strain ATCC 51142 / BH68) (Cyanothece sp. (strain ATCC 51142)).